A 351-amino-acid chain; its full sequence is S-adenosylmethionine:tRNA ribosyltransferase-isomerase (351 aa).

The protein belongs to the QueA family. In terms of assembly, monomer.

The protein resides in the cytoplasm. It carries out the reaction 7-aminomethyl-7-carbaguanosine(34) in tRNA + S-adenosyl-L-methionine = epoxyqueuosine(34) in tRNA + adenine + L-methionine + 2 H(+). It participates in tRNA modification; tRNA-queuosine biosynthesis. Functionally, transfers and isomerizes the ribose moiety from AdoMet to the 7-aminomethyl group of 7-deazaguanine (preQ1-tRNA) to give epoxyqueuosine (oQ-tRNA). The sequence is that of S-adenosylmethionine:tRNA ribosyltransferase-isomerase from Hydrogenovibrio crunogenus (strain DSM 25203 / XCL-2) (Thiomicrospira crunogena).